A 557-amino-acid chain; its full sequence is Glucose-6-phosphate isomerase (557 aa).

Ala-2 is subject to N-acetylalanine. Lys-12 bears the N6-acetyllysine mark. Position 107 is a phosphoserine (Ser-107). N6-acetyllysine is present on Lys-142. 159-160 contacts D-glucose 6-phosphate; sequence GS. Ser-185 is modified (phosphoserine; by CK2). 210-215 serves as a coordination point for D-glucose 6-phosphate; that stretch reads SKTFTT. Thr-250 is subject to Phosphothreonine. Gln-354, Glu-358, and His-389 together coordinate D-glucose 6-phosphate. Catalysis depends on Glu-358, which acts as the Proton donor. His-389 is a catalytic residue. Ser-455 carries the phosphoserine modification. Lys-519 contributes to the D-glucose 6-phosphate binding site. The active site involves Lys-519.

The protein belongs to the GPI family. In terms of assembly, homodimer; in the catalytically active form. Monomer in the secreted form. Post-translationally, phosphorylation at Ser-185 by CK2 has been shown to decrease enzymatic activity and may contribute to secretion by a non-classical secretory pathway. In terms of processing, ISGylated.

The protein resides in the cytoplasm. The protein localises to the secreted. The catalysed reaction is alpha-D-glucose 6-phosphate = beta-D-fructose 6-phosphate. It functions in the pathway carbohydrate degradation; glycolysis; D-glyceraldehyde 3-phosphate and glycerone phosphate from D-glucose: step 2/4. Its function is as follows. In the cytoplasm, catalyzes the conversion of glucose-6-phosphate to fructose-6-phosphate, the second step in glycolysis, and the reverse reaction during gluconeogenesis. Besides it's role as a glycolytic enzyme, also acts as a secreted cytokine: acts as an angiogenic factor (AMF) that stimulates endothelial cell motility. Acts as a neurotrophic factor, neuroleukin, for spinal and sensory neurons. It is secreted by lectin-stimulated T-cells and induces immunoglobulin secretion. The protein is Glucose-6-phosphate isomerase of Bos taurus (Bovine).